A 481-amino-acid chain; its full sequence is Probable glycine dehydrogenase (decarboxylating) subunit 2 (481 aa).

Residues 1–26 (MVIFEKTRGKNSPSVMPSKKGDVSNI) are disordered. K263 bears the N6-(pyridoxal phosphate)lysine mark.

It belongs to the GcvP family. C-terminal subunit subfamily. The glycine cleavage system is composed of four proteins: P, T, L and H. In this organism, the P 'protein' is a heterodimer of two subunits. The cofactor is pyridoxal 5'-phosphate.

It catalyses the reaction N(6)-[(R)-lipoyl]-L-lysyl-[glycine-cleavage complex H protein] + glycine + H(+) = N(6)-[(R)-S(8)-aminomethyldihydrolipoyl]-L-lysyl-[glycine-cleavage complex H protein] + CO2. Functionally, the glycine cleavage system catalyzes the degradation of glycine. The P protein binds the alpha-amino group of glycine through its pyridoxal phosphate cofactor; CO(2) is released and the remaining methylamine moiety is then transferred to the lipoamide cofactor of the H protein. In Francisella tularensis subsp. mediasiatica (strain FSC147), this protein is Probable glycine dehydrogenase (decarboxylating) subunit 2.